Here is a 520-residue protein sequence, read N- to C-terminus: BTB/POZ domain-containing protein At3g50780 (520 aa).

Residues 43–68 form a disordered region; it reads SHNSLTKHKQSSPALQPPKPEKKPSS. Positions 127 to 196 constitute a BTB domain; that stretch reads AKVILVGKQG…MYCKDMKQRL (70 aa).

The protein operates within protein modification; protein ubiquitination. Its function is as follows. May act as a substrate-specific adapter of an E3 ubiquitin-protein ligase complex (CUL3-RBX1-BTB) which mediates the ubiquitination and subsequent proteasomal degradation of target proteins. The protein is BTB/POZ domain-containing protein At3g50780 of Arabidopsis thaliana (Mouse-ear cress).